We begin with the raw amino-acid sequence, 287 residues long: U-megalopygitoxin(8)-Mc8 (287 aa).

Positions 1–17 (MYLQYLVLSLFSTTVYG) are cleaved as a signal peptide.

The protein belongs to the caterpillar 8 family. In terms of processing, contains 2 disulfide bonds. Expressed by the venom apparatus.

Its subcellular location is the secreted. In terms of biological role, probable toxin. This is U-megalopygitoxin(8)-Mc8 from Megalopyge crispata (Black-waved flannel moth).